Here is a 176-residue protein sequence, read N- to C-terminus: Ribosome maturation factor RimM (176 aa).

Residues 97 to 176 form the PRC barrel domain; sequence EDEFYWRDLI…QILVDWDPDF (80 aa).

Belongs to the RimM family. In terms of assembly, binds ribosomal protein uS19.

It localises to the cytoplasm. An accessory protein needed during the final step in the assembly of 30S ribosomal subunit, possibly for assembly of the head region. Essential for efficient processing of 16S rRNA. May be needed both before and after RbfA during the maturation of 16S rRNA. It has affinity for free ribosomal 30S subunits but not for 70S ribosomes. This is Ribosome maturation factor RimM from Shewanella sp. (strain MR-4).